The primary structure comprises 860 residues: DNA primase (860 aa).

A CHC2-type zinc finger spans residues 804-842 (CLNRQHRGNRDNVLVYIQLKADGNRLILILWSTCFATKC).

Belongs to the herpesviridae DNA primase family. As to quaternary structure, associates with the helicase and the primase-associated factor to form the helicase-primase factor.

The protein resides in the host nucleus. Its function is as follows. Essential component of the helicase/primase complex. Unwinds the DNA at the replication forks and generates single-stranded DNA for both leading and lagging strand synthesis. The primase initiates primer synthesis and thereby produces large amount of short RNA primers on the lagging strand that the polymerase elongates using dNTPs. The sequence is that of DNA primase (U43) from Homo sapiens (Human).